We begin with the raw amino-acid sequence, 37 residues long: Alpha-conotoxin TxID (37 aa).

The propeptide occupies 1–21 (FDGRNAAGNDKMSALMALTTR). Disulfide bonds link Cys-23/Cys-29 and Cys-24/Cys-36. Cys-36 is modified (cysteine amide).

It belongs to the conotoxin A superfamily. In terms of processing, unmodified Met-32 is essential for toxin binding to rat alpha-3-beta-4/CHRNA3-CHRNB4 nAChR. An oxidation of this methionine provokes a 13.3-fold decrease in inhibitory potency (IC(50)=245 nM instead of 18 nM). Owing to its potent activity, derivatives of this toxin have a potential in the development of a novel drug. Unfortunately, the oxidation of the methionine is readily to happen during toxin synthesis and oxidation steps as well as under oxidative environment in vivo, which should still be considered to find a solution to this major drawback. In terms of tissue distribution, expressed by the venom duct.

The protein resides in the secreted. Its function is as follows. Alpha-conotoxins act on postsynaptic membranes, they bind to the nicotinic acetylcholine receptors (nAChR) and thus inhibit them. This toxin inhibits alpha-3-beta-4/CHRNA3-CHRNB4 (IC(50)=3.6-18.38 nM), alpha-6/alpha-3-beta-4 (CHRNA6/CHRNA3-CHRNB4) (IC(50)=33.9-94.1 nM), and alpha-2-beta-4/CHRNA2-CHRNB4 (IC(50)=4550 nM) nAChRs. The toxin competes with agonists in the orthosteric binding site of alpha-3-beta-4/CHRNA3-CHRNB4 and alpha-6-beta-4/CHRNA6-CHRNB4. This is Alpha-conotoxin TxID from Conus textile (Cloth-of-gold cone).